Here is a 394-residue protein sequence, read N- to C-terminus: MPPKASKKDAAPAERPILGRFSSHLKIGIVGLPNVGKSTFFNIVTKLSIPAENFPFCTIDPNEARVYVPDERFDWLCQLYKPKSEVSAYLEINDIAGLVRGAHAGEGLGNAFLSHIRAVDGIFHVLRAFEDKEVTHIDDSVDPVRDLETIGEELRLKDIEFVQNKIDDLEKSMKRSNDKQLKLEHELCEKVKAHLEDGKDVRFGDWKSADIEILNTFQLLTAKPVVYLVNMSEKDYQRKKNKFLPKIHAWVQEHGGETIIPFSCAFERLLADMPPDEAAKYCAENQIASVIPKIIKTGFAAIHLIYFFTAGPDEVKCWQIRRQTKAPQAAGTIHTDFERGFICAEVMKFDDLKELGSESAVKAAGKYRQEGKTYVVQDADIIFFKFNVSGGGKK.

The OBG-type G domain maps to 25 to 282 (LKIGIVGLPN…MPPDEAAKYC (258 aa)). ATP is bound by residues 34 to 39 (NVGKST), 56 to 60 (FCTID), and 94 to 97 (DIAG). Mg(2+) contacts are provided by Ser-38 and Thr-58. Phe-129 lines the GTP pocket. Residues 230–231 (NM), Met-231, and 263–265 (SCA) each bind ATP. 263–265 (SCA) serves as a coordination point for GTP. Residues 303-386 (HLIYFFTAGP…QDADIIFFKF (84 aa)) enclose the TGS domain.

Belongs to the TRAFAC class OBG-HflX-like GTPase superfamily. OBG GTPase family. YchF/OLA1 subfamily. As to quaternary structure, monomer (Potential). Interacts with GAP1. Mg(2+) serves as cofactor.

The protein localises to the cytoplasm. It localises to the cell membrane. It is found in the cytosol. With respect to regulation, activated by GAP1. In terms of biological role, hydrolyzes ATP, and can also hydrolyze GTP with lower efficiency. Has lower affinity for GTP (Potential). Exhibits GTPase activity. Exhibits similar binding affinities and hydrolytic activities toward both GTP and ATP. Binds to the 26 S ribosomal RNA in vitro, but not to the 5.8 S or 18 S rRNA. Confers sensitivity to salinity stress by suppressing the anti-oxidation enzymatic activities and increasing lipid peroxidation thus leading to the accumulation of reactive oxygen species (ROS). In Oryza sativa subsp. indica (Rice), this protein is Obg-like ATPase 1.